A 408-amino-acid chain; its full sequence is UDP-N-acetylglucosamine--N-acetylmuramyl-(pentapeptide) pyrophosphoryl-undecaprenol N-acetylglucosamine transferase (408 aa).

Residues 1–20 (MNDTVKKPTGGRGDDPLPAG) form a disordered region. Residues 41-43 (TAG), N160, R197, S231, and Q327 contribute to the UDP-N-acetyl-alpha-D-glucosamine site.

It belongs to the glycosyltransferase 28 family. MurG subfamily.

It localises to the cell membrane. The enzyme catalyses di-trans,octa-cis-undecaprenyl diphospho-N-acetyl-alpha-D-muramoyl-L-alanyl-D-glutamyl-meso-2,6-diaminopimeloyl-D-alanyl-D-alanine + UDP-N-acetyl-alpha-D-glucosamine = di-trans,octa-cis-undecaprenyl diphospho-[N-acetyl-alpha-D-glucosaminyl-(1-&gt;4)]-N-acetyl-alpha-D-muramoyl-L-alanyl-D-glutamyl-meso-2,6-diaminopimeloyl-D-alanyl-D-alanine + UDP + H(+). Its pathway is cell wall biogenesis; peptidoglycan biosynthesis. Its function is as follows. Cell wall formation. Catalyzes the transfer of a GlcNAc subunit on undecaprenyl-pyrophosphoryl-MurNAc-pentapeptide (lipid intermediate I) to form undecaprenyl-pyrophosphoryl-MurNAc-(pentapeptide)GlcNAc (lipid intermediate II). In Mycolicibacterium paratuberculosis (strain ATCC BAA-968 / K-10) (Mycobacterium paratuberculosis), this protein is UDP-N-acetylglucosamine--N-acetylmuramyl-(pentapeptide) pyrophosphoryl-undecaprenol N-acetylglucosamine transferase.